Reading from the N-terminus, the 341-residue chain is tRNA N6-adenosine threonylcarbamoyltransferase (341 aa).

His-112 and His-116 together coordinate Fe cation. Substrate-binding positions include 134 to 138 (LASGG), Asp-167, Gly-180, and Asn-279. Residue Asp-307 coordinates Fe cation.

The protein belongs to the KAE1 / TsaD family. Fe(2+) serves as cofactor.

The protein localises to the cytoplasm. The enzyme catalyses L-threonylcarbamoyladenylate + adenosine(37) in tRNA = N(6)-L-threonylcarbamoyladenosine(37) in tRNA + AMP + H(+). Its function is as follows. Required for the formation of a threonylcarbamoyl group on adenosine at position 37 (t(6)A37) in tRNAs that read codons beginning with adenine. Is involved in the transfer of the threonylcarbamoyl moiety of threonylcarbamoyl-AMP (TC-AMP) to the N6 group of A37, together with TsaE and TsaB. TsaD likely plays a direct catalytic role in this reaction. The sequence is that of tRNA N6-adenosine threonylcarbamoyltransferase from Rickettsia bellii (strain OSU 85-389).